The primary structure comprises 225 residues: Uracil-DNA glycosylase (225 aa).

D65 serves as the catalytic Proton acceptor.

This sequence belongs to the uracil-DNA glycosylase (UDG) superfamily. UNG family.

Its subcellular location is the cytoplasm. The enzyme catalyses Hydrolyzes single-stranded DNA or mismatched double-stranded DNA and polynucleotides, releasing free uracil.. In terms of biological role, excises uracil residues from the DNA which can arise as a result of misincorporation of dUMP residues by DNA polymerase or due to deamination of cytosine. The polypeptide is Uracil-DNA glycosylase (Anoxybacillus flavithermus (strain DSM 21510 / WK1)).